We begin with the raw amino-acid sequence, 183 residues long: Gamma-crystallin N-A (183 aa).

Beta/gamma crystallin 'Greek key' domains are found at residues 6–46, 47–89, 95–136, and 138–180; these read GKIV…RVES, GAWV…KPIK, YRME…KVYG, and GAWA…RRVV.

Belongs to the beta/gamma-crystallin family. Monomer.

Crystallins are the dominant structural components of the vertebrate eye lens. This Danio rerio (Zebrafish) protein is Gamma-crystallin N-A (crygna).